Reading from the N-terminus, the 426-residue chain is Glutamate-1-semialdehyde 2,1-aminomutase (426 aa).

K265 is subject to N6-(pyridoxal phosphate)lysine.

Belongs to the class-III pyridoxal-phosphate-dependent aminotransferase family. HemL subfamily. Homodimer. Requires pyridoxal 5'-phosphate as cofactor.

It is found in the cytoplasm. It carries out the reaction (S)-4-amino-5-oxopentanoate = 5-aminolevulinate. The protein operates within porphyrin-containing compound metabolism; protoporphyrin-IX biosynthesis; 5-aminolevulinate from L-glutamyl-tRNA(Glu): step 2/2. The polypeptide is Glutamate-1-semialdehyde 2,1-aminomutase (Escherichia coli O9:H4 (strain HS)).